The chain runs to 296 residues: Transposase for insertion sequence element IST2 (296 aa).

The protein belongs to the transposase mutator family.

Required for the transposition of the insertion element. The chain is Transposase for insertion sequence element IST2 from Acidithiobacillus ferrooxidans (Thiobacillus ferrooxidans).